The primary structure comprises 130 residues: Small ribosomal subunit protein uS8 (130 aa).

Belongs to the universal ribosomal protein uS8 family. In terms of assembly, part of the 30S ribosomal subunit. Contacts proteins S5 and S12.

Its function is as follows. One of the primary rRNA binding proteins, it binds directly to 16S rRNA central domain where it helps coordinate assembly of the platform of the 30S subunit. This Vibrio cholerae serotype O1 (strain ATCC 39541 / Classical Ogawa 395 / O395) protein is Small ribosomal subunit protein uS8.